Here is a 179-residue protein sequence, read N- to C-terminus: NADH-quinone oxidoreductase subunit B (179 aa).

C35, C36, C100, and C129 together coordinate [4Fe-4S] cluster.

The protein belongs to the complex I 20 kDa subunit family. In terms of assembly, NDH-1 is composed of 14 different subunits. Subunits NuoB, C, D, E, F, and G constitute the peripheral sector of the complex. [4Fe-4S] cluster is required as a cofactor.

The protein localises to the cell inner membrane. It catalyses the reaction a quinone + NADH + 5 H(+)(in) = a quinol + NAD(+) + 4 H(+)(out). NDH-1 shuttles electrons from NADH, via FMN and iron-sulfur (Fe-S) centers, to quinones in the respiratory chain. Couples the redox reaction to proton translocation (for every two electrons transferred, four hydrogen ions are translocated across the cytoplasmic membrane), and thus conserves the redox energy in a proton gradient. The sequence is that of NADH-quinone oxidoreductase subunit B from Aquifex aeolicus (strain VF5).